Reading from the N-terminus, the 404-residue chain is Exodeoxyribonuclease 7 large subunit (404 aa).

The protein belongs to the XseA family. As to quaternary structure, heterooligomer composed of large and small subunits.

The protein resides in the cytoplasm. The enzyme catalyses Exonucleolytic cleavage in either 5'- to 3'- or 3'- to 5'-direction to yield nucleoside 5'-phosphates.. Bidirectionally degrades single-stranded DNA into large acid-insoluble oligonucleotides, which are then degraded further into small acid-soluble oligonucleotides. This is Exodeoxyribonuclease 7 large subunit from Ruminiclostridium cellulolyticum (strain ATCC 35319 / DSM 5812 / JCM 6584 / H10) (Clostridium cellulolyticum).